The primary structure comprises 167 residues: Peptide deformylase (167 aa).

The Fe cation site is built by cysteine 91 and histidine 133. Residue glutamate 134 is part of the active site. Histidine 137 provides a ligand contact to Fe cation.

It belongs to the polypeptide deformylase family. Requires Fe(2+) as cofactor.

It catalyses the reaction N-terminal N-formyl-L-methionyl-[peptide] + H2O = N-terminal L-methionyl-[peptide] + formate. Removes the formyl group from the N-terminal Met of newly synthesized proteins. Requires at least a dipeptide for an efficient rate of reaction. N-terminal L-methionine is a prerequisite for activity but the enzyme has broad specificity at other positions. The polypeptide is Peptide deformylase (Tolumonas auensis (strain DSM 9187 / NBRC 110442 / TA 4)).